Here is a 463-residue protein sequence, read N- to C-terminus: Zinc finger protein interacting with ribonucleoprotein K (463 aa).

The KRAB domain occupies 14–89; the sequence is VTFQDVAICF…PKTNLCEKCV (76 aa). Disordered stretches follow at residues 106–128 and 171–211; these read HSTE…KPLE and KYRK…TSNG. The span at 174 to 191 shows a compositional bias: basic and acidic residues; that stretch reads KSTEGRKETSHESDKSEE. Over residues 192–201 the composition is skewed to polar residues; that stretch reads CQSLSSQKQT. 9 C2H2-type zinc fingers span residues 215-237, 243-265, 271-293, 299-321, 327-349, 355-377, 383-405, 411-433, and 439-461; these read YECS…QRVH, WECR…RRIH, YECS…QKTH, YECS…KRVH, YKCS…RRIH, YECR…QRVH, YECS…QVVH, and YECD…QKCH.

It belongs to the krueppel C2H2-type zinc-finger protein family. As to quaternary structure, interacts with HNRPK. Expressed in ovary and liver, and at lower levels in brain and muscle.

The protein localises to the nucleus. Its function is as follows. May be a transcriptional repressor. The protein is Zinc finger protein interacting with ribonucleoprotein K (Zik1) of Mus musculus (Mouse).